Reading from the N-terminus, the 234-residue chain is Phosphoribosylaminoimidazole-succinocarboxamide synthase (234 aa).

Belongs to the SAICAR synthetase family.

It carries out the reaction 5-amino-1-(5-phospho-D-ribosyl)imidazole-4-carboxylate + L-aspartate + ATP = (2S)-2-[5-amino-1-(5-phospho-beta-D-ribosyl)imidazole-4-carboxamido]succinate + ADP + phosphate + 2 H(+). It functions in the pathway purine metabolism; IMP biosynthesis via de novo pathway; 5-amino-1-(5-phospho-D-ribosyl)imidazole-4-carboxamide from 5-amino-1-(5-phospho-D-ribosyl)imidazole-4-carboxylate: step 1/2. This chain is Phosphoribosylaminoimidazole-succinocarboxamide synthase, found in Pyrococcus furiosus (strain ATCC 43587 / DSM 3638 / JCM 8422 / Vc1).